The primary structure comprises 126 residues: Glycine cleavage system H protein (126 aa).

The Lipoyl-binding domain maps to 23–104; it reads TLTVGITDHA…PYDNWLFKIK (82 aa). The residue at position 64 (Lys64) is an N6-lipoyllysine.

It belongs to the GcvH family. The glycine cleavage system is composed of four proteins: P, T, L and H. It depends on (R)-lipoate as a cofactor.

Its function is as follows. The glycine cleavage system catalyzes the degradation of glycine. The H protein shuttles the methylamine group of glycine from the P protein to the T protein. This is Glycine cleavage system H protein from Paraburkholderia phymatum (strain DSM 17167 / CIP 108236 / LMG 21445 / STM815) (Burkholderia phymatum).